A 901-amino-acid chain; its full sequence is HTH-type transcriptional regulator MalT (901 aa).

Position 39 to 46 (39 to 46 (SPAGYGKT)) interacts with ATP. One can recognise an HTH luxR-type domain in the interval 829 to 894 (ELIRTSPLTQ…DAVQHAQQLL (66 aa)). The H-T-H motif DNA-binding region spans 853 to 872 (NEQIAGELAVAATTIKTHIR).

This sequence belongs to the MalT family. In terms of assembly, monomer in solution. Oligomerizes to an active state in the presence of the positive effectors ATP and maltotriose.

Its activity is regulated as follows. Activated by ATP and maltotriose, which are both required for DNA binding. In terms of biological role, positively regulates the transcription of the maltose regulon whose gene products are responsible for uptake and catabolism of malto-oligosaccharides. Specifically binds to the promoter region of its target genes, recognizing a short DNA motif called the MalT box. The sequence is that of HTH-type transcriptional regulator MalT from Salmonella gallinarum (strain 287/91 / NCTC 13346).